We begin with the raw amino-acid sequence, 905 residues long: Catenin alpha-2 (905 aa).

A Phosphothreonine modification is found at threonine 632. Residues serine 640, serine 651, and serine 853 each carry the phosphoserine modification. Residues 869-879 show a composition bias toward basic and acidic residues; sequence VKREKPEEFQT. The disordered stretch occupies residues 869-891; the sequence is VKREKPEEFQTRVRRGSQKKHIS. Basic residues predominate over residues 880–890; the sequence is RVRRGSQKKHI. The residue at position 891 (serine 891) is a Phosphoserine.

This sequence belongs to the vinculin/alpha-catenin family. Interacts with CDH1 and CDH2. Interacts with ZNF639; recruits CTNNA2 to the nucleus. Interacts with F-actin.

Its subcellular location is the cell membrane. The protein resides in the cytoplasm. The protein localises to the cytoskeleton. It localises to the cell junction. It is found in the adherens junction. Its subcellular location is the cell projection. The protein resides in the axon. The protein localises to the nucleus. Its function is as follows. May function as a linker between cadherin adhesion receptors and the cytoskeleton to regulate cell-cell adhesion and differentiation in the nervous system. Required for proper regulation of cortical neuronal migration and neurite growth. It acts as a negative regulator of Arp2/3 complex activity and Arp2/3-mediated actin polymerization. It thereby suppresses excessive actin branching which would impair neurite growth and stability. Regulates morphological plasticity of synapses and cerebellar and hippocampal lamination during development. Functions in the control of startle modulation. This chain is Catenin alpha-2 (CTNNA2), found in Pongo abelii (Sumatran orangutan).